The following is a 441-amino-acid chain: Asparagine--tRNA ligase, mitochondrial (441 aa).

Belongs to the class-II aminoacyl-tRNA synthetase family.

It localises to the mitochondrion. It carries out the reaction tRNA(Asn) + L-asparagine + ATP = L-asparaginyl-tRNA(Asn) + AMP + diphosphate + H(+). The chain is Asparagine--tRNA ligase, mitochondrial (slm5) from Schizosaccharomyces pombe (strain 972 / ATCC 24843) (Fission yeast).